A 194-amino-acid polypeptide reads, in one-letter code: MKIFFIDNFDSFSYNLVYELECLGYEVAVYQNDIDPSYLMGLMNEEPKTPLLFISPGPGNPNSSGNLLKIIAMAKKKFPILGVCLGLQALAQSYGAKIIRSKEIVHGKATTIALKKHAVFKGLGESMVVGRYHSLMASGLPKNLEVIAEHDNIPMAIVNEEDKILAYQFHPESIMTLQGRALLEQSVGFLRELS.

Residues 2 to 194 (KIFFIDNFDS…QSVGFLRELS (193 aa)) enclose the Glutamine amidotransferase type-1 domain. 57–59 (GPG) provides a ligand contact to L-glutamine. Catalysis depends on C84, which acts as the Nucleophile; for GATase activity. L-glutamine is bound by residues Q88 and 134–135 (SL). Active-site for GATase activity residues include H170 and E172.

As to quaternary structure, heterotetramer consisting of two non-identical subunits: a beta subunit (TrpG) and a large alpha subunit (TrpE).

The catalysed reaction is chorismate + L-glutamine = anthranilate + pyruvate + L-glutamate + H(+). Its pathway is amino-acid biosynthesis; L-tryptophan biosynthesis; L-tryptophan from chorismate: step 1/5. Part of a heterotetrameric complex that catalyzes the two-step biosynthesis of anthranilate, an intermediate in the biosynthesis of L-tryptophan. In the first step, the glutamine-binding beta subunit (TrpG) of anthranilate synthase (AS) provides the glutamine amidotransferase activity which generates ammonia as a substrate that, along with chorismate, is used in the second step, catalyzed by the large alpha subunit of AS (TrpE) to produce anthranilate. In the absence of TrpG, TrpE can synthesize anthranilate directly from chorismate and high concentrations of ammonia. The polypeptide is Anthranilate synthase component 2 (trpG) (Helicobacter pylori (strain J99 / ATCC 700824) (Campylobacter pylori J99)).